The sequence spans 1051 residues: Kinesin-like protein KIN-UC (1051 aa).

Low complexity-rich tracts occupy residues 1–12 (MSSSNSSSAVRS), 28–39 (NSNHAVSLSSSS), and 64–90 (SASS…PVRR). Disordered regions lie at residues 1–39 (MSSS…SSSS) and 51–109 (PGIA…RVSV). The Kinesin motor domain maps to 104 to 441 (RVRVSVRVRP…IMFGQRAMKI (338 aa)). 189-196 (GQTGTGKT) is a binding site for ATP. Positions 411-419 (RTSLIITIG) match the D-BOX motif. Coiled-coil stretches lie at residues 452-534 (DYES…QKDQ) and 568-761 (DTSQ…KRYM). Basic and acidic residues predominate over residues 753-766 (NVVEEKRYMKEDLS). The tract at residues 753-788 (NVVEEKRYMKEDLSKGSAESGAQTGSQRSQGLKKSL) is disordered. Over residues 772–788 (SGAQTGSQRSQGLKKSL) the composition is skewed to polar residues. ARM repeat units follow at residues 792–831 (RATM…NLAA), 833–873 (EANQ…NLAM), and 875–915 (EKSQ…NLCG). The stretch at 917–956 (EKFLKLLKEEEGIKGLLTMAQSGNIDIIAQVARGMANFAK) is one ARM 4; degenerate repeat.

It belongs to the TRAFAC class myosin-kinesin ATPase superfamily. Kinesin family. Ungrouped subfamily. As to quaternary structure, interacts (via C-terminus) with NEK5. Expressed in young root hair-forming cells and in root hair-producing cells at the boundary between the hypocotyl and root. Expressed in cotyledons, young leaves, trichomes and flowers.

Its subcellular location is the cytoplasm. It is found in the cytoskeleton. The protein localises to the spindle. The protein resides in the phragmoplast. Its function is as follows. Acts as a plus-end microtubule-dependent motor protein. Involved in the control of root hair tip growth by promoting microtubule depolymerization and limiting the accumulation of endoplasmic microtubules. In vitro, binds to polymerized actin through ARM repeats, and to polymerized tubulin through N-terminal motor domain. This chain is Kinesin-like protein KIN-UC, found in Arabidopsis thaliana (Mouse-ear cress).